Consider the following 293-residue polypeptide: Acetylglutamate kinase (293 aa).

Residues 70 to 71 (GG), arginine 92, and asparagine 186 each bind substrate.

Belongs to the acetylglutamate kinase family. ArgB subfamily.

Its subcellular location is the cytoplasm. The catalysed reaction is N-acetyl-L-glutamate + ATP = N-acetyl-L-glutamyl 5-phosphate + ADP. Its pathway is amino-acid biosynthesis; L-arginine biosynthesis; N(2)-acetyl-L-ornithine from L-glutamate: step 2/4. In terms of biological role, catalyzes the ATP-dependent phosphorylation of N-acetyl-L-glutamate. The chain is Acetylglutamate kinase from Synechococcus sp. (strain CC9605).